A 94-amino-acid polypeptide reads, in one-letter code: Small ribosomal subunit protein uS17 (94 aa).

The protein belongs to the universal ribosomal protein uS17 family. In terms of assembly, part of the 30S ribosomal subunit.

Its function is as follows. One of the primary rRNA binding proteins, it binds specifically to the 5'-end of 16S ribosomal RNA. This Streptomyces avermitilis (strain ATCC 31267 / DSM 46492 / JCM 5070 / NBRC 14893 / NCIMB 12804 / NRRL 8165 / MA-4680) protein is Small ribosomal subunit protein uS17.